Here is a 567-residue protein sequence, read N- to C-terminus: Chitinase 3 (567 aa).

The first 16 residues, 1-16 (MLYLLTIFSLLLPALA), serve as a signal peptide directing secretion. Residues 23–313 (SNVAVYWGQN…ENMKAIVKKA (291 aa)) form the GH18 domain. Catalysis depends on Glu-157, which acts as the Proton donor. An N-linked (GlcNAc...) asparagine glycan is attached at Asn-159. The tract at residues 313-471 (ASPGEETTSS…TSALSSSTTT (159 aa)) is disordered. Low complexity-rich tracts occupy residues 319 to 436 (TTSS…SLSS) and 444 to 471 (STTT…STTT).

The protein belongs to the glycosyl hydrolase 18 family. Chitinase class III subfamily.

Its subcellular location is the secreted. It carries out the reaction Random endo-hydrolysis of N-acetyl-beta-D-glucosaminide (1-&gt;4)-beta-linkages in chitin and chitodextrins.. Functionally, chitinase involved in the remodeling of chitin in the fungal cell wall. Plays a role in cell separation. This is Chitinase 3 (CHT3) from Candida albicans (strain SC5314 / ATCC MYA-2876) (Yeast).